The following is a 323-amino-acid chain: Acetyl-coenzyme A carboxylase carboxyl transferase subunit alpha (323 aa).

Residues 39–293 (RLSKKSQQLT…RRALGDSLRQ (255 aa)) form the CoA carboxyltransferase C-terminal domain.

The protein belongs to the AccA family. Acetyl-CoA carboxylase is a heterohexamer composed of biotin carboxyl carrier protein (AccB), biotin carboxylase (AccC) and two subunits each of ACCase subunit alpha (AccA) and ACCase subunit beta (AccD).

The protein localises to the cytoplasm. The catalysed reaction is N(6)-carboxybiotinyl-L-lysyl-[protein] + acetyl-CoA = N(6)-biotinyl-L-lysyl-[protein] + malonyl-CoA. It participates in lipid metabolism; malonyl-CoA biosynthesis; malonyl-CoA from acetyl-CoA: step 1/1. Component of the acetyl coenzyme A carboxylase (ACC) complex. First, biotin carboxylase catalyzes the carboxylation of biotin on its carrier protein (BCCP) and then the CO(2) group is transferred by the carboxyltransferase to acetyl-CoA to form malonyl-CoA. This Burkholderia pseudomallei (strain 1106a) protein is Acetyl-coenzyme A carboxylase carboxyl transferase subunit alpha.